The primary structure comprises 95 residues: Small ribosomal subunit protein bS6 (95 aa).

It belongs to the bacterial ribosomal protein bS6 family.

Functionally, binds together with bS18 to 16S ribosomal RNA. This Desulforamulus reducens (strain ATCC BAA-1160 / DSM 100696 / MI-1) (Desulfotomaculum reducens) protein is Small ribosomal subunit protein bS6.